The chain runs to 415 residues: PRKCA-binding protein (415 aa).

The region spanning 22–105 is the PDZ domain; sequence KVTLQKDAQN…EVTIHYNKLQ (84 aa). Zn(2+)-binding residues include Cys44 and Cys46. Residue Thr82 is modified to Phosphothreonine. Positions 144–357 constitute an AH domain; sequence LCNDGLVKRL…CYAVLRDADV (214 aa). Residues 376–415 are disordered; the sequence is EEFTDGEEEEEEEDTAAGEPARDTRGAAGPLDKGGSWCDS. The span at 377-391 shows a compositional bias: acidic residues; that stretch reads EFTDGEEEEEEEDTA. Residue Cys413 is the site of S-palmitoyl cysteine; by DHHC8 attachment.

In terms of assembly, monomer and homodimer. Interacts with CXADR. Interacts presynaptically with the glutamate receptors GRIA2, GRIA3, GRIK3, isoform 3 of GRIA4, isoform A of GRM4, GRM7 and GRM8; with NAPA and NAPB; and with BTG2. The interaction with NAPA and NAPB disrupts the interaction with GRIA2, conducting to the internalization of GRIA2. Interacts with PRKCA; with the amine transporters SLC6A2 and SLC6A3; with the channels ASIC1 and ASIC2; with the GTP-binding proteins ARF1 and ARF3; with the ephrin receptor tyrosine kinases EPHA7, EPHB1 and EPHB2; with ERBB2 and through its PDZ domain with the C-terminal tail of PRLHR. Interacts with UNC5A. Interacts (via AH domain) with NCS1/FREQ; in a calcium-dependent manner. Interacts with F-actin and associates with the ARP2/3 complex. Interacts (via PDZ domain) with ARF1 (activated); the interaction blocks Arp2/3 complex inhibition. Interacts with SORCS3. Phosphorylation at Thr-82 appears to inhibit the interaction with AMPA receptors. Post-translationally, palmitoylation on Cys-413 is essential for long-term synaptic depression (LTD).

Its subcellular location is the cytoplasm. The protein localises to the perinuclear region. It localises to the membrane. The protein resides in the postsynaptic density. It is found in the synapse. Its subcellular location is the synaptosome. The protein localises to the cytoskeleton. Probable adapter protein that bind to and organize the subcellular localization of a variety of membrane proteins containing some PDZ recognition sequence. Involved in the clustering of various receptors, possibly by acting at the receptor internalization level. Plays a role in synaptic plasticity by regulating the trafficking and internalization of AMPA receptors. May be regulated upon PRKCA activation. May regulate ASIC1/ASIC3 channel. Regulates actin polymerization by inhibiting the actin-nucleating activity of the Arp2/3 complex; the function is competitive with nucleation promoting factors and is linked to neuronal morphology regulation and AMPA receptor (AMPAR) endocytosis. Via interaction with the Arp2/3 complex involved in regulation of synaptic plasicity of excitatory synapses and required for spine shrinkage during long-term depression (LTD). Involved in regulation of astrocyte morphology, antagonistic to Arp2/3 complex activator WASL/N-WASP function. The polypeptide is PRKCA-binding protein (PICK1) (Pongo abelii (Sumatran orangutan)).